The primary structure comprises 512 residues: NADH-quinone oxidoreductase subunit M (512 aa).

Transmembrane regions (helical) follow at residues 3 to 23, 36 to 56, 84 to 104, 112 to 132, 133 to 153, 166 to 186, 208 to 228, 251 to 271, 285 to 305, 313 to 333, 341 to 361, 384 to 404, 419 to 439, and 464 to 484; these read NLLSIITFLPLAAAAVLAVVS, WVALTATVVTFLVSLLLLAGF, ISILFVMLTTFLMPLTIASAW, EYMIAFLVLEALMIGVFVALD, LVLFYLFFEAGLIPMFLIIGI, FFLYTFLGSVLMLVAMVAMYM, FLGWWTLTGGVQTLLFLAFFA, PTAGSVVLAAVLLKMGGYGFL, MTTFVFILSAVAIVYTSLVAL, LIAYSSVAHMGYVTMGIFAAN, IFQMLSHGFISGALFLCVGVI, ALIFMFFTMANVGLPGTSGFV, WVALFATSGVILSAAYALWLY, and AIFAPLVAMTLLLGVYPSLVT.

The protein belongs to the complex I subunit 4 family.

It is found in the cell membrane. It carries out the reaction a quinone + NADH + 5 H(+)(in) = a quinol + NAD(+) + 4 H(+)(out). In terms of biological role, NDH-1 shuttles electrons from NADH, via FMN and iron-sulfur (Fe-S) centers, to quinones in the respiratory chain. The immediate electron acceptor for the enzyme in this species is believed to be ubiquinone. Couples the redox reaction to proton translocation (for every two electrons transferred, four hydrogen ions are translocated across the cytoplasmic membrane), and thus conserves the redox energy in a proton gradient. The polypeptide is NADH-quinone oxidoreductase subunit M (nuoM) (Rhodobacter capsulatus (Rhodopseudomonas capsulata)).